Here is a 230-residue protein sequence, read N- to C-terminus: Large ribosomal subunit protein uL1 (230 aa).

The protein belongs to the universal ribosomal protein uL1 family. Part of the 50S ribosomal subunit.

Binds directly to 23S rRNA. The L1 stalk is quite mobile in the ribosome, and is involved in E site tRNA release. Its function is as follows. Protein L1 is also a translational repressor protein, it controls the translation of the L11 operon by binding to its mRNA. The protein is Large ribosomal subunit protein uL1 of Afipia carboxidovorans (strain ATCC 49405 / DSM 1227 / KCTC 32145 / OM5) (Oligotropha carboxidovorans).